The chain runs to 267 residues: Orotidine 5'-phosphate decarboxylase (267 aa).

Substrate is bound by residues aspartate 40, lysine 62–histidine 64, aspartate 93–threonine 102, tyrosine 215, and arginine 234. Lysine 95 (proton donor) is an active-site residue.

It belongs to the OMP decarboxylase family.

It carries out the reaction orotidine 5'-phosphate + H(+) = UMP + CO2. It functions in the pathway pyrimidine metabolism; UMP biosynthesis via de novo pathway; UMP from orotate: step 2/2. This is Orotidine 5'-phosphate decarboxylase (pyrG) from Phycomyces blakesleeanus (strain ATCC 8743b / DSM 1359 / FGSC 10004 / NBRC 33097 / NRRL 1555).